A 249-amino-acid chain; its full sequence is MEWSDEGIILGVRRHGEAGAIVELLTRSHGRHLGLVRGGASSRMRPLLQPGNSVLAVWRARLDEHLGYYQLEGTRMRAATMLASSHAVYGVTHLASLARLLPERDPHEDIYEMLERTLDDFDDVGDAATHLIRFELAMLAELGFGLDLSACAATGATVELIYVSPKSGSAVSRAAGEPWRDKLLRLPAFLRDDNDGRNGWSDQDLRDGFDLTGRFLLRNVLEPRGQGHSDARDGFINAVTRHLARTAIP.

Belongs to the RecO family.

In terms of biological role, involved in DNA repair and RecF pathway recombination. The polypeptide is DNA repair protein RecO (Rhodopseudomonas palustris (strain BisB5)).